Consider the following 307-residue polypeptide: Ras-related protein Rab-33 (307 aa).

A disordered region spans residues 19–80; the sequence is VIDPPKHVTA…IPPAPEAVTA (62 aa). Composition is skewed to pro residues over residues 42-56 and 65-75; these read PTHP…PAVP and PTAPPPIPPAP. 107-114 serves as a coordination point for GTP; that stretch reads GNAAVGKT. The Effector region signature appears at 129-137; that stretch reads TEATIGVDF. Residues 155–159 and 217–220 each bind GTP; these read DTAGQ and NKCD. Residues Cys306 and Cys307 are each lipidated (S-geranylgeranyl cysteine).

This sequence belongs to the small GTPase superfamily. Rab family.

Its subcellular location is the cell membrane. The sequence is that of Ras-related protein Rab-33 (rab-33) from Caenorhabditis elegans.